The following is a 378-amino-acid chain: Erythronate-4-phosphate dehydrogenase (378 aa).

2 residues coordinate substrate: Ser45 and Thr66. Positions 146 and 175 each coordinate NAD(+). The active site involves Arg208. Asp232 provides a ligand contact to NAD(+). Glu237 is a catalytic residue. Catalysis depends on His254, which acts as the Proton donor. Residue Gly257 participates in NAD(+) binding. A substrate-binding site is contributed by Tyr258.

It belongs to the D-isomer specific 2-hydroxyacid dehydrogenase family. PdxB subfamily. Homodimer.

The protein resides in the cytoplasm. The catalysed reaction is 4-phospho-D-erythronate + NAD(+) = (R)-3-hydroxy-2-oxo-4-phosphooxybutanoate + NADH + H(+). It functions in the pathway cofactor biosynthesis; pyridoxine 5'-phosphate biosynthesis; pyridoxine 5'-phosphate from D-erythrose 4-phosphate: step 2/5. Catalyzes the oxidation of erythronate-4-phosphate to 3-hydroxy-2-oxo-4-phosphonooxybutanoate. This is Erythronate-4-phosphate dehydrogenase from Escherichia coli O81 (strain ED1a).